Here is a 460-residue protein sequence, read N- to C-terminus: L-seryl-tRNA(Sec) selenium transferase (460 aa).

K293 carries the N6-(pyridoxal phosphate)lysine modification.

This sequence belongs to the SelA family. It depends on pyridoxal 5'-phosphate as a cofactor.

The protein localises to the cytoplasm. The enzyme catalyses L-seryl-tRNA(Sec) + selenophosphate + H(+) = L-selenocysteinyl-tRNA(Sec) + phosphate. It participates in aminoacyl-tRNA biosynthesis; selenocysteinyl-tRNA(Sec) biosynthesis; selenocysteinyl-tRNA(Sec) from L-seryl-tRNA(Sec) (bacterial route): step 1/1. Functionally, converts seryl-tRNA(Sec) to selenocysteinyl-tRNA(Sec) required for selenoprotein biosynthesis. This is L-seryl-tRNA(Sec) selenium transferase from Haemophilus ducreyi (strain 35000HP / ATCC 700724).